The primary structure comprises 276 residues: Sulfate transport system permease protein CysW (276 aa).

6 consecutive transmembrane segments (helical) span residues 16–36 (LIAL…IAVF), 64–84 (VVMA…AAWV), 99–119 (VLDL…VLLY), 136–156 (IIFS…PFVA), 212–232 (FGAV…LPIF), and 242–262 (TEAA…TLVL). Residues 60 to 267 (LQLTVVMALI…VTLVLKEILE (208 aa)) enclose the ABC transmembrane type-1 domain.

The protein belongs to the binding-protein-dependent transport system permease family. CysTW subfamily. As to quaternary structure, the complex is composed of two ATP-binding proteins (CysA), two transmembrane proteins (CysT and CysW) and a solute-binding protein (CysP).

It is found in the cell inner membrane. In terms of biological role, part of the ABC transporter complex CysAWTP (TC 3.A.1.6.1) involved in sulfate/thiosulfate import. Probably responsible for the translocation of the substrate across the membrane. The polypeptide is Sulfate transport system permease protein CysW (cysW) (Synechocystis sp. (strain ATCC 27184 / PCC 6803 / Kazusa)).